Consider the following 542-residue polypeptide: MSRQSLTKAHAKISELTWEPTFATPATRFGTDYTFEKAPKKDPLKQIMRSYFSMEEEKDNRVYGAMDGAIRGNMFRQVQQRWLEWQKLFLSIIPFPEISAARAMPMAIDAVPNPEIHNGLAVQMIDEVRHSTIQMNLKKLYMNNYIDPAGFDMTEKAFANNYAGTIGRQFGEGFITGDAITAANIYLTVVAETAFTNTLFVAMPDEAAANGDYLLPTVFHSVQSDESRHISNGYSILLMALADERNRPLLERDLRYAWWNNHCVVDAAIGTFIEYGTKDRRKDRESYAEMWRRWIYDDYYRSYLLPLEKYGLTIPHDLVEEAWKRIVEKGYVHEVARFFATGWPVNYWRIDTMTDTDFEWFEHKYPGWYNKFGKWWENYNRLAYPGRNKPIAFEEVGYQYPHRCWTCMVPALIREDMIVEKVDGQWRTYCSETCYWTDAVAFRGEYEGRATPNMGRLTGFREWETLHHGKDLADIVTDLGYVRDDGKTLVGQPHLDLDPQKMWTLDDVRGNTFNSPNVLLNQMTNDERDAHVAAYRAGGVPA.

Glu97, Glu127, His130, Glu192, Glu226, and His229 together coordinate Fe cation.

It belongs to the TmoA/XamoA family. In terms of assembly, the propane 2-monooxygenase multicomponent enzyme system is composed of an electron transfer component and a monooxygenase component interacting with the effector protein MimD. The electron transfer component is composed of a reductase (MimB), and the monooxygenase component is formed by a large subunit (MimA) and a small subunit (MimC). Requires the presence of the chaperonin-like protein MimG to ensure a productive folding, resulting of a soluble MimA, which leads to the active form of MimABCD. It depends on Fe(2+) as a cofactor.

The catalysed reaction is propane + NADH + O2 + H(+) = propan-2-ol + NAD(+) + H2O. It catalyses the reaction acetone + NADH + O2 + H(+) = hydroxyacetone + NAD(+) + H2O. It carries out the reaction butan-2-one + NADH + O2 + H(+) = 1-hydroxy-2-butanone + NAD(+) + H2O. The enzyme catalyses phenol + NADH + O2 + H(+) = hydroquinone + NAD(+) + H2O. Functionally, component of the propane 2-monooxygenase multicomponent enzyme system which is involved in the degradation of propane via the O2-dependent hydroxylation of propane. Also involved in the degradation of acetone via the O2-dependent hydroxylation of acetone. Also able to catalyze the oxidation of phenol, methylethylketone (2-butanone), 1-propanol and 2-propanol. The protein is Propane 2-monooxygenase, hydroxylase component large subunit of Mycolicibacterium goodii (Mycobacterium goodii).